Reading from the N-terminus, the 1049-residue chain is Vacuolar membrane protease (1049 aa).

Topologically, residues 1-11 (MKCYNPSAFVP) are cytoplasmic. The chain crosses the membrane as a helical span at residues 12–32 (MAVTLVTVIIYLGVFIPLLII). Topologically, residues 33 to 438 (QETVPSAPDD…TVFAVFKLRT (406 aa)) are vacuolar. Asn-50 carries N-linked (GlcNAc...) asparagine glycosylation. The tract at residues 114 to 135 (DAEAPESVPSPSNSNDGSAERY) is disordered. Asn-157 is a glycosylation site (N-linked (GlcNAc...) asparagine). The Zn(2+) site is built by His-221 and Asp-233. The active-site Proton acceptor is Glu-267. Zn(2+) is bound by residues Glu-268, Glu-293, and His-365. A helical transmembrane segment spans residues 439 to 459 (LFAWSLTLLIAAPLMLFAVSY). At 460 to 495 (LLNRQDKFYFFAGSIKAKGPEDEPISLGGWRGAFRY) the chain is on the cytoplasmic side. Residues 496–516 (PITLIITCAITFGCASLINKI) form a helical membrane-spanning segment. The Vacuolar segment spans residues 517 to 526 (NPMIVYSSPY). The chain crosses the membrane as a helical span at residues 527-547 (SVWSMSASLFFSIFWFIMAGC). The Cytoplasmic portion of the chain corresponds to 548–557 (NFVRPSALQR). The chain crosses the membrane as a helical span at residues 558-578 (GYAFMWLFVFGWIILVAATVY). The Vacuolar segment spans residues 579-585 (EDRFKIS). A helical transmembrane segment spans residues 586 to 606 (GGYLFVFYEAAIFLATLIAIG). Residues 607 to 740 (EQFALPKKST…LPIWTWLVQY (134 aa)) lie on the Cytoplasmic side of the membrane. Positions 621-686 (SQLDHDGNQD…IGGGAPTQRS (66 aa)) are disordered. The span at 622–633 (QLDHDGNQDSHH) shows a compositional bias: basic and acidic residues. A compositionally biased stretch (acidic residues) spans 655–664 (GQEEDPEDNV). The helical transmembrane segment at 741–761 (LLVGPFILIVVGQVGLFLVAA) threads the bilayer. Residues 762–773 (LHQTGTDGSPLL) are Vacuolar-facing. The chain crosses the membrane as a helical span at residues 774–794 (LPYLVVAVFSILLLLPVTPFI). Residues 795-801 (HRLTHHM) lie on the Cytoplasmic side of the membrane. The chain crosses the membrane as a helical span at residues 802 to 822 (PTFFFLVFIGTLIYNLVAFPF). At 823 to 1049 (SPNNRYKAYF…LVEGSKRFVV (227 aa)) the chain is on the vacuolar side. N-linked (GlcNAc...) asparagine glycosylation is present at Asn-914.

The protein belongs to the peptidase M28 family. Zn(2+) serves as cofactor.

The protein resides in the vacuole membrane. May be involved in vacuolar sorting and osmoregulation. This chain is Vacuolar membrane protease, found in Botryotinia fuckeliana (strain B05.10) (Noble rot fungus).